The primary structure comprises 118 residues: Holo-[acyl-carrier-protein] synthase (118 aa).

Mg(2+) contacts are provided by Asp8 and Glu58.

Belongs to the P-Pant transferase superfamily. AcpS family. It depends on Mg(2+) as a cofactor.

Its subcellular location is the cytoplasm. The catalysed reaction is apo-[ACP] + CoA = holo-[ACP] + adenosine 3',5'-bisphosphate + H(+). Functionally, transfers the 4'-phosphopantetheine moiety from coenzyme A to a Ser of acyl-carrier-protein. The protein is Holo-[acyl-carrier-protein] synthase of Streptococcus pyogenes serotype M1.